Here is a 701-residue protein sequence, read N- to C-terminus: Polyribonucleotide nucleotidyltransferase (701 aa).

2 residues coordinate Mg(2+): Asp487 and Asp493. In terms of domain architecture, KH spans 554 to 613 (PTMIAMKIDTDKIRDVIGKGGATIRAICEETKASIDIEDDGSIKIFGESKEAAEAARQRV). Positions 623 to 691 (GKIYVGKVER…NRGRIKLSIK (69 aa)) constitute an S1 motif domain.

This sequence belongs to the polyribonucleotide nucleotidyltransferase family. In terms of assembly, component of the RNA degradosome, which is a multiprotein complex involved in RNA processing and mRNA degradation. Requires Mg(2+) as cofactor.

It is found in the cytoplasm. The catalysed reaction is RNA(n+1) + phosphate = RNA(n) + a ribonucleoside 5'-diphosphate. Involved in mRNA degradation. Catalyzes the phosphorolysis of single-stranded polyribonucleotides processively in the 3'- to 5'-direction. The polypeptide is Polyribonucleotide nucleotidyltransferase (Pseudomonas savastanoi pv. phaseolicola (strain 1448A / Race 6) (Pseudomonas syringae pv. phaseolicola (strain 1448A / Race 6))).